The chain runs to 239 residues: Ubiquinone biosynthesis O-methyltransferase (239 aa).

R45, G64, D85, and M129 together coordinate S-adenosyl-L-methionine.

The protein belongs to the methyltransferase superfamily. UbiG/COQ3 family.

It catalyses the reaction a 3-demethylubiquinol + S-adenosyl-L-methionine = a ubiquinol + S-adenosyl-L-homocysteine + H(+). The catalysed reaction is a 3-(all-trans-polyprenyl)benzene-1,2-diol + S-adenosyl-L-methionine = a 2-methoxy-6-(all-trans-polyprenyl)phenol + S-adenosyl-L-homocysteine + H(+). It participates in cofactor biosynthesis; ubiquinone biosynthesis. O-methyltransferase that catalyzes the 2 O-methylation steps in the ubiquinone biosynthetic pathway. In Nitrosospira multiformis (strain ATCC 25196 / NCIMB 11849 / C 71), this protein is Ubiquinone biosynthesis O-methyltransferase.